The sequence spans 248 residues: Triosephosphate isomerase (248 aa).

Asn-9 to Lys-11 provides a ligand contact to substrate. The active-site Electrophile is His-92. Glu-164 functions as the Proton acceptor in the catalytic mechanism. Substrate-binding positions include Gly-170, Ser-209, and Gly-230–Gly-231.

Belongs to the triosephosphate isomerase family. In terms of assembly, homodimer.

Its subcellular location is the cytoplasm. It catalyses the reaction D-glyceraldehyde 3-phosphate = dihydroxyacetone phosphate. It participates in carbohydrate biosynthesis; gluconeogenesis. The protein operates within carbohydrate degradation; glycolysis; D-glyceraldehyde 3-phosphate from glycerone phosphate: step 1/1. Involved in the gluconeogenesis. Catalyzes stereospecifically the conversion of dihydroxyacetone phosphate (DHAP) to D-glyceraldehyde-3-phosphate (G3P). The chain is Triosephosphate isomerase from Thiobacillus denitrificans (strain ATCC 25259 / T1).